A 355-amino-acid chain; its full sequence is Cyclic nucleotide-gated potassium channel mll3241 (355 aa).

Topologically, residues 1 to 12 (MSVLPFLRIYAP) are cytoplasmic. A helical transmembrane segment spans residues 13 to 30 (LNAVLAAPGLLAVAALTI). At 31–38 (PDMSGRSR) the chain is on the periplasmic side. A helical membrane pass occupies residues 39-61 (LALAALLAVIWGAYLLQLAATLL). The Cytoplasmic portion of the chain corresponds to 62–74 (KRRAGVVRDRTPK). A helical membrane pass occupies residues 75 to 94 (IAIDVLAVLVPLAAFLLDGS). Residues 95–112 (PDWSLYCAVWLLKPLRDS) form a helical membrane-spanning segment. At 113–129 (TFFPVLGRVLANEARNL) the chain is on the cytoplasmic side. The helical transmembrane segment at 130–150 (IGVTTLFGVVLFAVALAAYVI) threads the bilayer. Residues 151-161 (ERDIQPEKFGS) lie on the Periplasmic side of the membrane. The segment at residues 162–180 (IPQAMWWAVVTLSTTGYGD) is an intramembrane region (pore-forming). Positions 175-180 (TTGYGD) match the Selectivity filter motif. Topologically, residues 181 to 185 (TIPQS) are periplasmic. A helical transmembrane segment spans residues 186–210 (FAGRVLAGAVMMSGIGIFGLWAGIL). The Cytoplasmic portion of the chain corresponds to 211 to 355 (ATGFYQEVRR…LERRGAAASA (145 aa)). Residues 297–298 (GE), 307–308 (RS), and arginine 348 contribute to the 3',5'-cyclic AMP site.

It belongs to the potassium channel family. In terms of assembly, homotetramer.

It is found in the cell membrane. Cyclic nucleotide-regulated potassium channel activated by cAMP. This is Cyclic nucleotide-gated potassium channel mll3241 from Mesorhizobium japonicum (strain LMG 29417 / CECT 9101 / MAFF 303099) (Mesorhizobium loti (strain MAFF 303099)).